The sequence spans 189 residues: MEVILLERIGRLGQMGDTVKVKDGYARNFLLPQGKALRANEANKKKFEGQRAQLEAQNLERKNEAQAVADKLNGESFIVVRSAGETGQLYGSVSTRDIAEIITANGFTLHRNQVELNHPIKTIGLHEVSVLLHPEVQVKVMVNIARSTEEAERQAKGEDLTSIEAIYGIEEQPLSEEVFDDEDEAEDQA.

Belongs to the bacterial ribosomal protein bL9 family.

Functionally, binds to the 23S rRNA. This is Large ribosomal subunit protein bL9 from Brucella ovis (strain ATCC 25840 / 63/290 / NCTC 10512).